Consider the following 117-residue polypeptide: Large ribosomal subunit protein bL19 (117 aa).

This sequence belongs to the bacterial ribosomal protein bL19 family.

In terms of biological role, this protein is located at the 30S-50S ribosomal subunit interface and may play a role in the structure and function of the aminoacyl-tRNA binding site. The protein is Large ribosomal subunit protein bL19 of Alkaliphilus metalliredigens (strain QYMF).